Consider the following 337-residue polypeptide: Anthranilate phosphoribosyltransferase (337 aa).

5-phospho-alpha-D-ribose 1-diphosphate contacts are provided by residues Gly-81, 84-85 (GD), Thr-89, 91-94 (NIST), 109-117 (KHGNRALSS), and Thr-121. Gly-81 provides a ligand contact to anthranilate. Residue Ser-93 coordinates Mg(2+). Residue Asn-112 participates in anthranilate binding. Residue Arg-167 participates in anthranilate binding. Mg(2+) contacts are provided by Asp-225 and Glu-226.

This sequence belongs to the anthranilate phosphoribosyltransferase family. As to quaternary structure, homodimer. It depends on Mg(2+) as a cofactor.

The enzyme catalyses N-(5-phospho-beta-D-ribosyl)anthranilate + diphosphate = 5-phospho-alpha-D-ribose 1-diphosphate + anthranilate. The protein operates within amino-acid biosynthesis; L-tryptophan biosynthesis; L-tryptophan from chorismate: step 2/5. In terms of biological role, catalyzes the transfer of the phosphoribosyl group of 5-phosphorylribose-1-pyrophosphate (PRPP) to anthranilate to yield N-(5'-phosphoribosyl)-anthranilate (PRA). This Rhizobium meliloti (strain 1021) (Ensifer meliloti) protein is Anthranilate phosphoribosyltransferase.